The sequence spans 1319 residues: DNA-directed RNA polymerase subunit beta' (1319 aa).

Residues Cys-60, Cys-62, Cys-75, and Cys-78 each coordinate Zn(2+). Asp-535, Asp-537, and Asp-539 together coordinate Mg(2+). The Zn(2+) site is built by Cys-890, Cys-971, Cys-978, and Cys-981.

It belongs to the RNA polymerase beta' chain family. As to quaternary structure, the RNAP catalytic core consists of 2 alpha, 1 beta, 1 beta' and 1 omega subunit. When a sigma factor is associated with the core the holoenzyme is formed, which can initiate transcription. Requires Mg(2+) as cofactor. It depends on Zn(2+) as a cofactor.

It catalyses the reaction RNA(n) + a ribonucleoside 5'-triphosphate = RNA(n+1) + diphosphate. Its function is as follows. DNA-dependent RNA polymerase catalyzes the transcription of DNA into RNA using the four ribonucleoside triphosphates as substrates. The chain is DNA-directed RNA polymerase subunit beta' from Mycobacteroides abscessus (strain ATCC 19977 / DSM 44196 / CCUG 20993 / CIP 104536 / JCM 13569 / NCTC 13031 / TMC 1543 / L948) (Mycobacterium abscessus).